Consider the following 469-residue polypeptide: Coumaroyl-CoA:anthocyanidin 3-O-glucoside-6''-O-coumaroyltransferase 1 (469 aa).

Met-1 is subject to N-acetylmethionine. Active-site proton acceptor residues include His-173 and Asp-410.

Belongs to the plant acyltransferase family. As to expression, highly expressed in flowers, leaves and roots. Lower levels of expression in stems and siliques.

Its function is as follows. Involved in the acylation of the 6'' position of the 3-O-glucose residue of anthocyanin. Also able to use flavonol 3-glucosides as the acyl acceptor. This Arabidopsis thaliana (Mouse-ear cress) protein is Coumaroyl-CoA:anthocyanidin 3-O-glucoside-6''-O-coumaroyltransferase 1 (3AT1).